Here is a 211-residue protein sequence, read N- to C-terminus: Protein 33K (211 aa).

Disordered regions lie at residues 1–95 (MPPK…PCSL) and 107–140 (AGSP…QDSP). Over residues 24–65 (DEEETWDDSQAEEVSDEEAEEQMESWDSLDEEDLEDVEEETI) the composition is skewed to acidic residues. Positions 83–92 (KTIPPLPPQP) are enriched in pro residues. The span at 129-140 (TSSAIATRQDSP) shows a compositional bias: polar residues. Residues 154 to 181 (YAIFQQSRGQQLELKVKNRSLRSLTRSC) are necessary for nuclear subcellular location. The interval 160-180 (SRGQQLELKVKNRSLRSLTRS) is RS-repeat; required for splicing enhancer activity.

Belongs to the adenoviridae splicing factor family. As to quaternary structure, homooligomer. Interacts with DBP; this interaction occurs at a unique vertex during genome packaging. Interacts with IVa2; this interaction occurs at a unique vertex during genome packaging and seems to potentiate IVa2 and 33K oligomerization. Phosphorylated in vitro by human PKA and PRKDC. PRKDC inhibits, whereas PKA activates the splicing factor.

The protein resides in the host nucleus. Its function is as follows. Promotes alternative splicing of late transcripts by promoting splicing at weak 3' splice sites. Required for the temporal activation of major late pre-mRNA splicing at late times of infection. Induces the splicing and expression of the late capsid vertex protein. Probably functions as the small terminase that is part of the molecular motor that translocates genomic DNA in empty capsid during DNA packaging. This motor is located at a unique vertex and comprises at least the IVa2 ATPase, the small terminase 33K and probably a portal. Forms a ring-like structure of about 17 nm in which genomic DNA is translocated into the capsid. Stimulates IVa2 ATPase activity in the presence of the viral genome. Once the DNA is packaged, the terminase detaches: the 33K protein is present in the empty particles, but not in the mature virions. Also involved in virion assembly. This chain is Protein 33K, found in Human adenovirus F serotype 40 (HAdV-40).